We begin with the raw amino-acid sequence, 244 residues long: AA9 family lytic polysaccharide monooxygenase B (244 aa).

Positions 1–19 are cleaved as a signal peptide; it reads MFLVPLLAALSLSAPKVAA. H20 is a Cu(2+) binding site. Y39 is a binding site for (1,4-beta-D-glucosyl)n. Cystine bridges form between C68/C189 and C111/C115. Residue H99 coordinates Cu(2+). A glycan (N-linked (GlcNAc...) asparagine) is linked at N152. O2 is bound by residues H178 and Q184. Y186 provides a ligand contact to Cu(2+). 3 residues coordinate (1,4-beta-D-glucosyl)n: D224, Y226, and E229. An N-linked (GlcNAc...) asparagine glycan is attached at N233.

Belongs to the polysaccharide monooxygenase AA9 family. The cofactor is Cu(2+).

Its subcellular location is the secreted. The enzyme catalyses [(1-&gt;4)-beta-D-glucosyl]n+m + reduced acceptor + O2 = 4-dehydro-beta-D-glucosyl-[(1-&gt;4)-beta-D-glucosyl]n-1 + [(1-&gt;4)-beta-D-glucosyl]m + acceptor + H2O.. Lytic polysaccharide monooxygenase (LPMO) that depolymerizes crystalline and amorphous polysaccharides via the oxidation of scissile alpha- or beta-(1-4)-glycosidic bonds, yielding specifically C1 oxidation product. Catalysis by LPMOs requires the reduction of the active-site copper from Cu(II) to Cu(I) by a reducing agent and H(2)O(2) or O(2) as a cosubstrate. Displays catalytic activity on insoluble cellulose using I-beta microfibril model substrate. The sequence is that of AA9 family lytic polysaccharide monooxygenase B from Heterobasidion irregulare (strain TC 32-1).